The following is a 325-amino-acid chain: Tetraacyldisaccharide 4'-kinase (325 aa).

54 to 61 (SVGGTGKT) contributes to the ATP binding site.

The protein belongs to the LpxK family.

The enzyme catalyses a lipid A disaccharide + ATP = a lipid IVA + ADP + H(+). It participates in glycolipid biosynthesis; lipid IV(A) biosynthesis; lipid IV(A) from (3R)-3-hydroxytetradecanoyl-[acyl-carrier-protein] and UDP-N-acetyl-alpha-D-glucosamine: step 6/6. In terms of biological role, transfers the gamma-phosphate of ATP to the 4'-position of a tetraacyldisaccharide 1-phosphate intermediate (termed DS-1-P) to form tetraacyldisaccharide 1,4'-bis-phosphate (lipid IVA). This is Tetraacyldisaccharide 4'-kinase from Rickettsia akari (strain Hartford).